The chain runs to 320 residues: MQTLSQSLKQSAISEELASLLTVLANSSKDISQAVRRGALAGVLGVAGTENVQGEDQKKLDVITNDMLKDALAAQGSVKALASEEEDEIVPLAQDGQFLVCFDPLDGSSNIDINSLVGTIFSVLPAPSGDVSEQSFLQPGRKQLAAGYVLYGPSTMLALTTGQGVQLFTLDPVSGDYLLTVDGVQISKDTGEFAINMSNQRFWEPGMQAYIADLIQGKEGPRGKNFNMRWIAAMVGDVHRVLCRGGLFTYPTDTKDPKKPFKLRLMYEANPMAFLVEQAGGKASTGYETILDIAPSEIHQRVAVILGSANEVDACLGYHN.

Mg(2+)-binding residues include Glu84, Asp103, Leu105, and Asp106. Substrate contacts are provided by residues 106–109, Asn196, and Lys262; that span reads DGSS. Position 268 (Glu268) interacts with Mg(2+).

This sequence belongs to the FBPase class 1 family. As to quaternary structure, homotetramer. Mg(2+) serves as cofactor.

Its subcellular location is the cytoplasm. It carries out the reaction beta-D-fructose 1,6-bisphosphate + H2O = beta-D-fructose 6-phosphate + phosphate. The protein operates within carbohydrate biosynthesis; gluconeogenesis. The protein is Fructose-1,6-bisphosphatase class 1 of Shewanella amazonensis (strain ATCC BAA-1098 / SB2B).